A 292-amino-acid chain; its full sequence is 4-hydroxy-tetrahydrodipicolinate synthase (292 aa).

Residue T45 participates in pyruvate binding. Y133 functions as the Proton donor/acceptor in the catalytic mechanism. K161 (schiff-base intermediate with substrate) is an active-site residue. Residue I203 coordinates pyruvate.

Belongs to the DapA family. As to quaternary structure, homotetramer; dimer of dimers.

It localises to the cytoplasm. It carries out the reaction L-aspartate 4-semialdehyde + pyruvate = (2S,4S)-4-hydroxy-2,3,4,5-tetrahydrodipicolinate + H2O + H(+). It participates in amino-acid biosynthesis; L-lysine biosynthesis via DAP pathway; (S)-tetrahydrodipicolinate from L-aspartate: step 3/4. Catalyzes the condensation of (S)-aspartate-beta-semialdehyde [(S)-ASA] and pyruvate to 4-hydroxy-tetrahydrodipicolinate (HTPA). The protein is 4-hydroxy-tetrahydrodipicolinate synthase of Vibrio cholerae serotype O1 (strain M66-2).